The chain runs to 120 residues: MSNKTKLIQQIEAEQMTKEVPAFGPGDTIVVQVKVKEGSRERLQAYEGIVISKRNRGLNSAFTVRKISSGIGVERAFQTYSPLVESIEVKRRGDVRQAKIYYLRERSGKSARIKEKLAKR.

This sequence belongs to the bacterial ribosomal protein bL19 family.

This protein is located at the 30S-50S ribosomal subunit interface and may play a role in the structure and function of the aminoacyl-tRNA binding site. In Marinomonas sp. (strain MWYL1), this protein is Large ribosomal subunit protein bL19.